The sequence spans 892 residues: Translation initiation factor IF-2 (892 aa).

Residues 165–175 (EEQAELERQKT) are compositionally biased toward basic and acidic residues. Disordered stretches follow at residues 165 to 250 (EEQA…EDDS) and 264 to 300 (ERARRGSNTRGKGGGSHRGATHRGNENSIRSSGAHGF). Over residues 208–222 (PRAVRPAPAARPSVS) the composition is skewed to low complexity. The tr-type G domain maps to 391–560 (PRPPVVTIMG…SIQAEVLELK (170 aa)). GTP is bound by residues 400-407 (GHVDHGKT), 446-450 (DTPGH), and 500-503 (SKID).

It belongs to the TRAFAC class translation factor GTPase superfamily. Classic translation factor GTPase family. IF-2 subfamily.

The protein resides in the cytoplasm. Its function is as follows. One of the essential components for the initiation of protein synthesis. Protects formylmethionyl-tRNA from spontaneous hydrolysis and promotes its binding to the 30S ribosomal subunits. Also involved in the hydrolysis of GTP during the formation of the 70S ribosomal complex. The protein is Translation initiation factor IF-2 of Xylella fastidiosa (strain 9a5c).